The sequence spans 173 residues: Putative metal-dependent hydrolase OB0413 (173 aa).

The Zn(2+) site is built by His64, His155, and His159.

It belongs to the metal hydrolase YfiT family. As to quaternary structure, homodimer. Requires Zn(2+) as cofactor.

It is found in the cytoplasm. Its function is as follows. Possible metal-dependent hydrolase. The protein is Putative metal-dependent hydrolase OB0413 of Oceanobacillus iheyensis (strain DSM 14371 / CIP 107618 / JCM 11309 / KCTC 3954 / HTE831).